Here is a 257-residue protein sequence, read N- to C-terminus: MNTAIITGAAQGVGLCIAEALAQRNYRIVLSDIDTEKGPAAASKLNLTHGEGTAAFFHCDLSNLREIDALLSFTIETMGGFSVLINNAGYLRAPFLALSAQDIQDMITVNLTAPIYATQQAIKYWDGLHQGQAGCVVSVTSSSSFKTYASIAPYGAAKAGAAMFTFAAGAFHPRVRVNAVAPTAIATGFDKNRMRVETDRTGPGYTPEEEMRAMGLKRLQPQEVAEAVVRCVEDKGLYGKVLYLDAVEGIKIHDGYT.

Positions 1–22 are cleaved as a signal peptide; that stretch reads MNTAIITGAAQGVGLCIAEALA. Position 13 (Val13) interacts with NADP(+). A glycan (N-linked (GlcNAc...) asparagine) is linked at Asn46. Positions 60 and 87 each coordinate NADP(+). N-linked (GlcNAc...) asparagine glycosylation is present at Asn110. 4 residues coordinate NADP(+): Tyr154, Lys158, Ile185, and Thr187. Catalysis depends on Tyr154, which acts as the Proton acceptor. Residue Lys158 is the Lowers pKa of active site Tyr of the active site.

The protein belongs to the short-chain dehydrogenases/reductases (SDR) family.

The protein operates within mycotoxin biosynthesis. In terms of biological role, short chain dehydrogenase; part of the gene cluster that mediates the biosynthesis of helvolic acid, an antibacterial nortriterpenoid. Protostadienol synthase helA cyclizes (3S)-oxidosqualene to (17Z)-protosta-17(20),24-dien-3-beta-ol (protostadienol). The synthesis of protostadienol is followed by several steps of monooxygenation, dehydrogenation, and acyl transfer to yield the final helvolic acid. Following the cyclization to the tetracyclic protostadienol by helA, cytochrome P450 monooxygenases helB1-mediated and helB2-mediated oxidation at C-4 and C-16, acyltransferase helD2-dependent acetylation of 16-OH, oxidation of C-21 by cytochrome P450 monooxygenase helB4, and short chain dehydrogenase helC-dependent oxidative decarboxylation yield the fusidane skeleton. This intermediate is further modified in three additional steps mediated by the cytochrome P450 monooxygenase helB3, the acyltransferase helD1, and the 3-ketosteroid 1-dehydrogenase helE to give helvolic acid. Compared with the late stages in the biosynthesis of helvolic acid, enzymes involved in the early stage modifications act in a relatively strict order. The hydroxylation of C-16 by helB1 and subsequent acetylation by helD2 should occur before the helB3-mediated oxidation of C-21. C-4 demethylation in fusidane-type antibiotics proceeds in an unusual manner though it is also achieved by oxidative decarboxylation. The methyl group at C-4 beta position is oxidized by helB1 and subsequently removed by the short chain dehydrogenase helC. The protein is Short chain dehydrogenase helC of Aspergillus fumigatus (strain ATCC MYA-4609 / CBS 101355 / FGSC A1100 / Af293) (Neosartorya fumigata).